Here is a 101-residue protein sequence, read N- to C-terminus: Urease subunit beta (101 aa).

This sequence belongs to the urease beta subunit family. Heterotrimer of UreA (gamma), UreB (beta) and UreC (alpha) subunits. Three heterotrimers associate to form the active enzyme.

It is found in the cytoplasm. The enzyme catalyses urea + 2 H2O + H(+) = hydrogencarbonate + 2 NH4(+). Its pathway is nitrogen metabolism; urea degradation; CO(2) and NH(3) from urea (urease route): step 1/1. This is Urease subunit beta from Burkholderia ambifaria (strain MC40-6).